The following is a 268-amino-acid chain: 3-deoxy-manno-octulosonate cytidylyltransferase (268 aa).

The protein belongs to the KdsB family.

It is found in the cytoplasm. It carries out the reaction 3-deoxy-alpha-D-manno-oct-2-ulosonate + CTP = CMP-3-deoxy-beta-D-manno-octulosonate + diphosphate. Its pathway is nucleotide-sugar biosynthesis; CMP-3-deoxy-D-manno-octulosonate biosynthesis; CMP-3-deoxy-D-manno-octulosonate from 3-deoxy-D-manno-octulosonate and CTP: step 1/1. The protein operates within bacterial outer membrane biogenesis; lipopolysaccharide biosynthesis. Activates KDO (a required 8-carbon sugar) for incorporation into bacterial lipopolysaccharide in Gram-negative bacteria. The sequence is that of 3-deoxy-manno-octulosonate cytidylyltransferase from Psychrobacter arcticus (strain DSM 17307 / VKM B-2377 / 273-4).